The chain runs to 99 residues: NADH-quinone oxidoreductase subunit K (99 aa).

3 consecutive transmembrane segments (helical) span residues 3-23, 28-48, and 59-79; these read PANYLYLSVLLFTIGASGVLL, IVMFMCVELMLNAVNLAFVTF, and MIAFFTMVVAACEVVVGLAII.

This sequence belongs to the complex I subunit 4L family. As to quaternary structure, NDH-1 is composed of 14 different subunits. Subunits NuoA, H, J, K, L, M, N constitute the membrane sector of the complex.

It localises to the cell membrane. The catalysed reaction is a quinone + NADH + 5 H(+)(in) = a quinol + NAD(+) + 4 H(+)(out). In terms of biological role, NDH-1 shuttles electrons from NADH, via FMN and iron-sulfur (Fe-S) centers, to quinones in the respiratory chain. The immediate electron acceptor for the enzyme in this species is believed to be a menaquinone. Couples the redox reaction to proton translocation (for every two electrons transferred, four hydrogen ions are translocated across the cytoplasmic membrane), and thus conserves the redox energy in a proton gradient. This Mycobacterium bovis (strain ATCC BAA-935 / AF2122/97) protein is NADH-quinone oxidoreductase subunit K.